Reading from the N-terminus, the 143-residue chain is Small ribosomal subunit protein eS12 (143 aa).

This sequence belongs to the eukaryotic ribosomal protein eS12 family. In terms of assembly, component of the small ribosomal subunit. Mature ribosomes consist of a small (40S) and a large (60S) subunit. The 40S subunit contains about 32 different proteins and 1 molecule of RNA (18S). The 60S subunit contains 45 different proteins and 3 molecules of RNA (25S, 5.8S and 5S).

It is found in the cytoplasm. In terms of biological role, component of the ribosome, a large ribonucleoprotein complex responsible for the synthesis of proteins in the cell. The small ribosomal subunit (SSU) binds messenger RNAs (mRNAs) and translates the encoded message by selecting cognate aminoacyl-transfer RNA (tRNA) molecules. The large subunit (LSU) contains the ribosomal catalytic site termed the peptidyl transferase center (PTC), which catalyzes the formation of peptide bonds, thereby polymerizing the amino acids delivered by tRNAs into a polypeptide chain. The nascent polypeptides leave the ribosome through a tunnel in the LSU and interact with protein factors that function in enzymatic processing, targeting, and the membrane insertion of nascent chains at the exit of the ribosomal tunnel. The polypeptide is Small ribosomal subunit protein eS12 (RPS12) (Candida albicans (strain SC5314 / ATCC MYA-2876) (Yeast)).